The sequence spans 327 residues: Pyruvate dehydrogenase E1 component subunit beta (327 aa).

A thiamine diphosphate-binding site is contributed by E63.

In terms of assembly, heterodimer of an alpha and a beta chain. The cofactor is thiamine diphosphate.

It catalyses the reaction N(6)-[(R)-lipoyl]-L-lysyl-[protein] + pyruvate + H(+) = N(6)-[(R)-S(8)-acetyldihydrolipoyl]-L-lysyl-[protein] + CO2. Its function is as follows. The pyruvate dehydrogenase complex catalyzes the overall conversion of pyruvate to acetyl-CoA and CO(2). It contains multiple copies of three enzymatic components: pyruvate dehydrogenase (E1), dihydrolipoamide acetyltransferase (E2) and lipoamide dehydrogenase (E3). The chain is Pyruvate dehydrogenase E1 component subunit beta (pdhB) from Mycoplasma pneumoniae (strain ATCC 29342 / M129 / Subtype 1) (Mycoplasmoides pneumoniae).